A 1081-amino-acid chain; its full sequence is uncharacterized protein (1081 aa).

Coiled coils occupy residues 18-131 (AIEE…FEEN) and 173-242 (NHDE…NDDK). The segment covering 22–53 (NNKNREIQEKRQKETKDRNDRMVQNQKDRKEM) has biased composition (basic and acidic residues). Residues 22–60 (NNKNREIQEKRQKETKDRNDRMVQNQKDRKEMIGLTNEK) form a disordered region. Disordered stretches follow at residues 250 to 321 (TDDE…KPGI) and 388 to 1081 (QEPK…GNDE). Pro residues predominate over residues 267 to 283 (TPTPTPTPTPTPTPTPT). 2 stretches are compositionally biased toward low complexity: residues 284-313 (PTTT…KTST) and 396-410 (NNQS…QAGD). Residues 411–421 (DQNKNQNRDEN) show a composition bias toward basic and acidic residues. Composition is skewed to low complexity over residues 422–568 (NQGG…NNQE), 576–602 (NQDG…GGEN), 614–623 (GENNQDGGEN), 633–644 (DGENNQDGGENN), 662–672 (GENNQDGGENN), and 680–733 (QDGG…NNQD). 3 stretches are compositionally biased toward acidic residues: residues 748–768 (GGED…DNQD), 778–832 (NNQD…DENN), and 840–854 (QDGD…DENN). Low complexity-rich tracts occupy residues 855 to 869 (NQDG…GENN) and 877 to 888 (NQDGGENNQDGE). A compositionally biased stretch (acidic residues) spans 889 to 954 (NNQDGDENNN…GDENNQDGDE (66 aa)). Composition is skewed to low complexity over residues 955–975 (NNQG…GGDE), 983–1026 (ENNQ…GGDE), and 1034–1081 (GENN…GNDE).

This is an uncharacterized protein from Dictyostelium discoideum (Social amoeba).